A 48-amino-acid chain; its full sequence is Small polypeptide DEVIL 14 (48 aa).

Residues 4–23 (TVVLRCCTSVTKVRTWKRCS) traverse the membrane as a helical segment. The segment at 17–48 (RTWKRCSKQIKEQRARLYIIWKCAVFLLSSHD) is required for DVL/RTFL small polypeptide activity.

The protein belongs to the DVL/RTFL small polypeptides family.

It is found in the cell membrane. Its function is as follows. Small polypeptide acting as a regulatory molecule which coordinates cellular responses required for differentiation, growth and development, probably by restricting polar cell proliferation in lateral organs and coordinating socket cell recruitment and differentiation at trichome sites. The protein is Small polypeptide DEVIL 14 of Arabidopsis thaliana (Mouse-ear cress).